The primary structure comprises 408 residues: Bifunctional polynucleotide phosphatase/kinase (408 aa).

Residues 1–38 (MSSKKRKSPPQESLTSYFEKSSKSSKKYGSQNKDSDSS) form a disordered region. The residue at position 8 (Ser-8) is a Phosphoserine. Polar residues-rich tracts occupy residues 10–19 (PQESLTSYFE) and 28–38 (YGSQNKDSDSS). 263–270 (GFPSSGKS) serves as a coordination point for ATP.

In the N-terminal section; belongs to the DNA 3' phosphatase family.

It is found in the nucleus. It catalyses the reaction a 3'end (2'-deoxyribonucleotide 3'-phosphate)-DNA + H2O = a 3'-end 2'-deoxyribonucleotide-DNA + phosphate. The enzyme catalyses a 5'-end dephospho-2'-deoxyribonucleoside-DNA + ATP = a 5'-end 5'-phospho-2'-deoxyribonucleoside-DNA + ADP + H(+). Catalyzes the phosphorylation of DNA at 5'-hydroxyl termini and can dephosphorylate its 3'-phosphate termini. Has a role in the repair of breaks in single-stranded DNA. This is Bifunctional polynucleotide phosphatase/kinase (pnk1) from Schizosaccharomyces pombe (strain 972 / ATCC 24843) (Fission yeast).